Here is a 171-residue protein sequence, read N- to C-terminus: 6,7-dimethyl-8-ribityllumazine synthase (171 aa).

5-amino-6-(D-ribitylamino)uracil contacts are provided by residues Phe-30, 64–66 (ALE), and 88–90 (AVI). 93–94 (ET) serves as a coordination point for (2S)-2-hydroxy-3-oxobutyl phosphate. His-96 (proton donor) is an active-site residue. 5-amino-6-(D-ribitylamino)uracil is bound at residue Asn-121. Residue Arg-135 coordinates (2S)-2-hydroxy-3-oxobutyl phosphate.

It belongs to the DMRL synthase family.

It catalyses the reaction (2S)-2-hydroxy-3-oxobutyl phosphate + 5-amino-6-(D-ribitylamino)uracil = 6,7-dimethyl-8-(1-D-ribityl)lumazine + phosphate + 2 H2O + H(+). Its pathway is cofactor biosynthesis; riboflavin biosynthesis; riboflavin from 2-hydroxy-3-oxobutyl phosphate and 5-amino-6-(D-ribitylamino)uracil: step 1/2. Catalyzes the formation of 6,7-dimethyl-8-ribityllumazine by condensation of 5-amino-6-(D-ribitylamino)uracil with 3,4-dihydroxy-2-butanone 4-phosphate. This is the penultimate step in the biosynthesis of riboflavin. In Polynucleobacter necessarius subsp. necessarius (strain STIR1), this protein is 6,7-dimethyl-8-ribityllumazine synthase.